A 338-amino-acid polypeptide reads, in one-letter code: MEQELQNLENEAKASLTAICASESLEEFRIKYLGRKGLFTTVMRQLGSAPAEDRPRLGQLANTIKAQLEEQFEEKRSSLSQQTSSSDTYQSLPDLTLPGRQPAAGNLHPVTQVMQEVCAIFEAMGFSVAEGPDVEQDYYNFEALNIPAHHPARDMHDTFYVSGSTLLRTHTSPMQARVMEKQDPPLRMIAPGKVYRCDSDITHTPMFHQVEGLLVDKNISFADLKGVLTLFLQKIFKQDLPVRFRPSFFPFTEPSAEVDIACVMCGGKGCRVCKKTGWLEILGAGMVDPEVFKMVGYDPEVYSGFAFGLGIERIAMLKYRIDDIRLFYENDQRFLSQF.

The segment at 71 to 101 is disordered; that stretch reads QFEEKRSSLSQQTSSSDTYQSLPDLTLPGRQ. Residues 78-92 show a composition bias toward low complexity; sequence SLSQQTSSSDTYQSL. E253 serves as a coordination point for Mg(2+).

This sequence belongs to the class-II aminoacyl-tRNA synthetase family. Phe-tRNA synthetase alpha subunit type 1 subfamily. Tetramer of two alpha and two beta subunits. The cofactor is Mg(2+).

It is found in the cytoplasm. It catalyses the reaction tRNA(Phe) + L-phenylalanine + ATP = L-phenylalanyl-tRNA(Phe) + AMP + diphosphate + H(+). This Desulfotalea psychrophila (strain LSv54 / DSM 12343) protein is Phenylalanine--tRNA ligase alpha subunit.